The chain runs to 569 residues: Linoleate hydratase (569 aa).

Tyr87 provides a ligand contact to FAD. The Proton donor role is filled by Tyr205. Positions 254, 300, and 524 each coordinate FAD.

This sequence belongs to the oleate hydratase family. FAD is required as a cofactor.

Its subcellular location is the cell membrane. The protein localises to the cytoplasm. The enzyme catalyses (9Z,12Z)-octadecadienoate + H2O = (10S)-hydroxy-(12Z)-octadecenoate. It catalyses the reaction (10E,12Z)-octadecadienoate + H2O = (10S)-hydroxy-(12Z)-octadecenoate. The catalysed reaction is (9Z)-octadecenoate + H2O = 10-hydroxyoctadecanoate. It carries out the reaction (10E)-octadecenoate + H2O = 10-hydroxyoctadecanoate. The enzyme catalyses (9E,11E)-octadecadienoate + H2O = 10-hydroxy-(11E)-octadecenoate. It catalyses the reaction (9Z,11E)-octadecadienoate + H2O = 10-hydroxy-(11E)-octadecenoate. The catalysed reaction is (9Z)-hexadecenoate + H2O = 10-hydroxyhexadecanoate. It carries out the reaction (9Z,12Z,15Z)-octadecatrienoate + H2O = (10S)-hydroxy-(12Z,15Z)-octadecadienoate. The enzyme catalyses (6Z,9Z,12Z)-octadecatrienoate + H2O = (10S)-hydroxy-(6Z,12Z)-octadecadienoate. It catalyses the reaction (6Z,9Z,12Z,15Z)-octadecatetraenoate + H2O = (10S)-hydroxy-(6Z,12Z,15Z)-octadecatrienoate. It functions in the pathway lipid metabolism; fatty acid metabolism. With respect to regulation, the addition of NADH or NADPH highly increases catalytic activity, likely by reducing the cofactor FAD to FADH2. The hydration and dehydration reactions are strongly inhibited by Ag(+), Fe(2+), Cu(2+), Zn(2+), Hg(2+), and Fe(3+). In terms of biological role, is involved in a saturation metabolic pathway of polyunsaturated fatty acids, that detoxifies unsaturated fatty acids and generates hydroxy fatty acids, oxo fatty acids, conjugated fatty acids such as conjugated linoleic acids (CLAs), and partially saturated trans-fatty acids as intermediates. CLA-HY catalyzes the hydration and dehydration steps in the production of 10-hydroxy-cis-12-octadecenoate, trans-10,cis-12-CLA, cis-9,trans-11-CLA, trans-9,trans-11-CLA, oleate and trans-10-octadecenoate during linoleate metabolism. Is also able to hydrate palmitoleic acid (cis-9-hexadecenoic acid), oleic acid, alpha-linolenic acid, gamma-linolenic acid, and stearidonic acid into the corresponding 10-hydroxy fatty acids, and dehydrate 10-hydroxy-cis-12,cis-15-octadecadienoic acid, 10-hydroxy-cis-6,cis-12-octadecadienoic acid, and 10-hydroxyoctadecanoic acid into the corresponding fatty acids with cis double bonds at the Delta9 position. As part of the gut microbiome, this enzyme modifies host fatty acid composition and is expected to improve human health by altering lipid metabolism related to the onset of metabolic syndrome. Shows regioselectivity for Delta9 double bond hydration, generating C10 hydroxy groups in the (S)-configuration with high enantioselectivity, when another double bond is in position 12. Is not able to hydrate fatty acids with a trans carbon-carbon double bond at Delta9 position (elaidic acid, trans-9-octadecenoic acid), fatty acid esters (methyl linoleate, monolinolein, dilinolein, and trilinolein), and conjugated fatty acids (conjugated linoleic acids), as well as fatty acids with other chain lengths, such as myristoleic acid (cis-9-tetradecenoic acid), arachidonic acid (cis-5,cis-8,cis-11,cis-14-eicosatetraenoic acid), EPA (cis-5,cis-8,cis-11,cis-14,cis-17-eicosapentaenoic acid), DHA (cis-4,cis-7,cis-10,cis-13,cis-16,cis-19-docosahexaenoic acid) and fatty acids with a cis carbon-carbon double bond at Delta11 position, such as cis-vaccenic acid and cis-11-octadecenoic acid, or fatty alcohols, such as linoleyl alcohol. Is not able to dehydrate 12-hydroxy, 3-hydroxy, and 9-hydroxy fatty acids. This is Linoleate hydratase from Lactiplantibacillus plantarum (Lactobacillus plantarum).